The following is a 351-amino-acid chain: Flagellin (351 aa).

This sequence belongs to the bacterial flagellin family.

The protein localises to the secreted. The protein resides in the bacterial flagellum. Its function is as follows. Flagellin is the subunit protein which polymerizes to form the filaments of bacterial flagella. The chain is Flagellin (fliC) from Serratia marcescens.